Consider the following 87-residue polypeptide: Phosphoribosyl-ATP pyrophosphatase (87 aa).

The protein belongs to the PRA-PH family.

The protein localises to the cytoplasm. The enzyme catalyses 1-(5-phospho-beta-D-ribosyl)-ATP + H2O = 1-(5-phospho-beta-D-ribosyl)-5'-AMP + diphosphate + H(+). Its pathway is amino-acid biosynthesis; L-histidine biosynthesis; L-histidine from 5-phospho-alpha-D-ribose 1-diphosphate: step 2/9. In Clavibacter sepedonicus (Clavibacter michiganensis subsp. sepedonicus), this protein is Phosphoribosyl-ATP pyrophosphatase.